Consider the following 256-residue polypeptide: Osteocalcin 2 (256 aa).

The N-terminal stretch at 1–18 (MKTLVLLSICALLSVCWS) is a signal peptide. Residues 19–209 (MGAVEPEVVV…LASVLLRRRR (191 aa)) constitute a propeptide that is removed on maturation. Low complexity predominate over residues 38 to 186 (AAPADPAAAA…SSSSSSSSES (149 aa)). Positions 38–193 (AAPADPAAAA…SESASDEAAK (156 aa)) are disordered. A Gla domain is found at 218–252 (PLQLESLREVCELNIACDEMAETAGIVAAYVAYYG). E222, E226, E229, and D235 together coordinate Ca(2+). Residues E222, E226, and E229 each carry the 4-carboxyglutamate modification. The cysteines at positions 228 and 234 are disulfide-linked. E236 carries the post-translational modification 4-carboxyglutamate.

It belongs to the osteocalcin/matrix Gla protein family. Gamma-carboxyglutamate residues are formed by vitamin K dependent carboxylation by GGCX. These residues are essential for the binding of calcium.

It is found in the secreted. Functionally, the carboxylated form is one of the main organic components of the bone matrix, which constitutes 1-2% of the total bone protein. The carboxylated form binds strongly to apatite and calcium. The polypeptide is Osteocalcin 2 (Diplodus sargus (White seabream)).